A 333-amino-acid polypeptide reads, in one-letter code: Ornithine carbamoyltransferase (333 aa).

Residues 56-59, arginine 107, and 134-137 each bind carbamoyl phosphate; these read STRT and HPTQ. Residues asparagine 167, aspartate 231, and 235–236 contribute to the L-ornithine site; that span reads SM. Carbamoyl phosphate-binding positions include 273–274 and arginine 318; that span reads CL.

It belongs to the aspartate/ornithine carbamoyltransferase superfamily. OTCase family.

The protein resides in the cytoplasm. The enzyme catalyses carbamoyl phosphate + L-ornithine = L-citrulline + phosphate + H(+). It functions in the pathway amino-acid degradation; L-arginine degradation via ADI pathway; carbamoyl phosphate from L-arginine: step 2/2. Its function is as follows. Reversibly catalyzes the transfer of the carbamoyl group from carbamoyl phosphate (CP) to the N(epsilon) atom of ornithine (ORN) to produce L-citrulline. The polypeptide is Ornithine carbamoyltransferase (Clostridium botulinum (strain 657 / Type Ba4)).